A 185-amino-acid polypeptide reads, in one-letter code: p53 apoptosis effector related to PMP-22 (185 aa).

4 helical membrane-spanning segments follow: residues 13–33 (WILP…IAAQ), 74–94 (VAAL…ISLV), 105–125 (LPFI…ALII), and 143–163 (WAYG…ILFC).

It belongs to the TMEM47 family.

The protein localises to the cell junction. It is found in the desmosome. Its subcellular location is the cell membrane. It localises to the cytoplasm. In terms of biological role, component of intercellular desmosome junctions. Positively regulates apoptosis in the early-stage embryo in response to UV irradiation, this is partially dependent on tp53 activation. Required for the survival of cell populations in the developing notochord and skin, therefore required for normal embryogenesis beyond 30 hpf. Acts as a positive regulator of endothelial cell apoptosis in response to blood flow-derived shear stress. In Danio rerio (Zebrafish), this protein is p53 apoptosis effector related to PMP-22.